The primary structure comprises 175 residues: Peptide deformylase (175 aa).

Positions 99 and 141 each coordinate Fe cation. The active site involves E142. H145 contacts Fe cation.

The protein belongs to the polypeptide deformylase family. Fe(2+) is required as a cofactor.

It carries out the reaction N-terminal N-formyl-L-methionyl-[peptide] + H2O = N-terminal L-methionyl-[peptide] + formate. Functionally, removes the formyl group from the N-terminal Met of newly synthesized proteins. Requires at least a dipeptide for an efficient rate of reaction. N-terminal L-methionine is a prerequisite for activity but the enzyme has broad specificity at other positions. The sequence is that of Peptide deformylase from Rickettsia akari (strain Hartford).